The chain runs to 248 residues: Putative eukaryotic initiation factor 4A-like protein (248 aa).

Residues 14-42 (VGFASLGLNEQLINNIKRYGITKLTPFQM) carry the Q motif motif. A Helicase ATP-binding domain is found at 45-239 (IKEIKENSNV…NTFIKIPKII (195 aa)). 58–65 (SIEGTGRT) serves as a coordination point for ATP. A DEAD box motif is present at residues 185–188 (DELD).

The protein belongs to the DEAD box helicase family. eIF4A subfamily.

In Dictyostelium discoideum (Social amoeba), this protein is Putative eukaryotic initiation factor 4A-like protein.